Here is a 462-residue protein sequence, read N- to C-terminus: Putative F-box protein At1g12855 (462 aa).

Basic and acidic residues predominate over residues 1 to 22; the sequence is MESREDSFISKEKKSTMKKEKQ. The disordered stretch occupies residues 1–59; it reads MESREDSFISKEKKSTMKKEKQAIASQRNRRRVIKNRGNGKRLIASLSQRKRRRIPRGR. Over residues 28–40 the composition is skewed to basic residues; that stretch reads RNRRRVIKNRGNG. Residues 65–110 enclose the F-box domain; the sequence is VFAPSSLPNDVVEEIFLRLPVKAIIQLKSLSKQWRSTIESRSFEER.

This is Putative F-box protein At1g12855 from Arabidopsis thaliana (Mouse-ear cress).